The sequence spans 563 residues: MRYIKSMTQQKLSFLLALYIGLFMNCAVFYRRFGSYAQEFTIWKGLSAVVELGATVLVTFFLLRLLSLFGRRVWRVLATLVVLFSAGASYYMTFLNVVIGYGIIASVMTTDIDLSKEVVGLHFVLWLIAVSVLPLIFIWSNHCRYTLLRQLRTPGQRFRSAAVVVLAGVMVWAPIRLLDIQQKKVERATGIDLPSYGGVVANSYLPSNWLSALGLYAWAQVDESSDNNSLINPARKFTYVAPKDGDDTYVVFIIGETTRWDHMGIFGYERNTTPKLAQEKNLAAFRGYSCDTATKLSLRCMFVREGGADNNPQRTLKEQNVFAVLKQLGFSSDLYAMQSEMWFYSNTMADNISYREQIGAEPRNRGKTVDDMLLIDEMQNSLAQNPEGKHLIILHTKGSHFNYTQRYPRSYAQWKPECIGVDSGCTKAQMINSYDNSVTYVDHFITSVFDQLRDKKAIVFYAADHGESINEREHLHGTPRNMAPPEQFRVPMLVWMSDKYLASPQHAQMFAHLKQQAEIKVPRRHVELYDTIMGCLGYTSPNGGINQNNNWCHIPDVQKVAAK.

The Cytoplasmic portion of the chain corresponds to 1–9; sequence MRYIKSMTQ. The helical transmembrane segment at 10-30 threads the bilayer; that stretch reads QKLSFLLALYIGLFMNCAVFY. Residues 31–48 are Periplasmic-facing; that stretch reads RRFGSYAQEFTIWKGLSA. A helical transmembrane segment spans residues 49 to 69; that stretch reads VVELGATVLVTFFLLRLLSLF. The Cytoplasmic portion of the chain corresponds to 70–79; the sequence is GRRVWRVLAT. The chain crosses the membrane as a helical span at residues 80–100; the sequence is LVVLFSAGASYYMTFLNVVIG. Residues 101–117 are Periplasmic-facing; it reads YGIIASVMTTDIDLSKE. A helical membrane pass occupies residues 118–138; the sequence is VVGLHFVLWLIAVSVLPLIFI. Topologically, residues 139 to 159 are cytoplasmic; that stretch reads WSNHCRYTLLRQLRTPGQRFR. A helical membrane pass occupies residues 160 to 180; that stretch reads SAAVVVLAGVMVWAPIRLLDI. Over 181–563 the chain is Periplasmic; sequence QQKKVERATG…IPDVQKVAAK (383 aa).

Belongs to the phosphoethanolamine transferase family. EptB subfamily. The cofactor is Ca(2+).

Its subcellular location is the cell inner membrane. The catalysed reaction is alpha-Kdo-(2-&gt;4)-alpha-Kdo-(2-&gt;6)-lipid A (E. coli) + a 1,2-diacyl-sn-glycero-3-phosphoethanolamine = 7-O-[2-aminoethoxy(hydroxy)phosphoryl]-alpha-Kdo-(2-&gt;4)-alpha-Kdo-(2-&gt;6)-lipid A + a 1,2-diacyl-sn-glycerol. It carries out the reaction alpha-Kdo-(2-&gt;4)-alpha-Kdo-(2-&gt;6)-lipid IVA (E. coli) + a 1,2-diacyl-sn-glycero-3-phosphoethanolamine = 7-O-[2-aminoethoxy(hydroxy)phosphoryl]-alpha-Kdo-(2-&gt;4)-alpha-Kdo-(2-&gt;6)-lipid IVA (E. coli) + a 1,2-diacyl-sn-glycerol. Catalyzes the addition of a phosphoethanolamine (pEtN) moiety to the outer 3-deoxy-D-manno-octulosonic acid (Kdo) residue of a Kdo(2)-lipid A. Phosphatidylethanolamines with one unsaturated acyl group function as pEtN donors and the reaction releases diacylglycerol. The protein is Kdo(2)-lipid A phosphoethanolamine 7''-transferase (eptB) of Salmonella typhimurium (strain LT2 / SGSC1412 / ATCC 700720).